Consider the following 201-residue polypeptide: MKLLAINGSPNKRNTLFLLEVIAEEVKKLGHEAEIIHLKDYEIKECKGCDACLKGDCSQKDDIYKVLEKMQEADAIVIGTPTYFGNVTGIVKNLIDRSRMARMGNYRLRNRVFAPVVTSGLRNGGAEYAAMSLIVYALGQAMLPVSIVENPITTGTFPVGVIQGDAGWRSVKKDEIAINSAKALAKRIVEVAEATKNLRES.

[4Fe-4S] cluster contacts are provided by Cys-46, Cys-49, Cys-52, and Cys-57.

The protein belongs to the SsuE family. Isf subfamily. As to quaternary structure, homodimer. The cofactor is FMN. [4Fe-4S] cluster is required as a cofactor.

Functionally, redox-active protein probably involved in electron transport. This chain is Iron-sulfur flavoprotein AF_1896, found in Archaeoglobus fulgidus (strain ATCC 49558 / DSM 4304 / JCM 9628 / NBRC 100126 / VC-16).